Consider the following 355-residue polypeptide: Ribosomal RNA large subunit methyltransferase M (355 aa).

S-adenosyl-L-methionine-binding positions include S191, 224 to 227 (APGG), D243, D263, and D279. Residue K308 is the Proton acceptor of the active site.

The protein belongs to the class I-like SAM-binding methyltransferase superfamily. RNA methyltransferase RlmE family. RlmM subfamily. Monomer.

It is found in the cytoplasm. The catalysed reaction is cytidine(2498) in 23S rRNA + S-adenosyl-L-methionine = 2'-O-methylcytidine(2498) in 23S rRNA + S-adenosyl-L-homocysteine + H(+). In terms of biological role, catalyzes the 2'-O-methylation at nucleotide C2498 in 23S rRNA. This is Ribosomal RNA large subunit methyltransferase M from Stenotrophomonas maltophilia (strain K279a).